The following is a 73-amino-acid chain: Large ribosomal subunit protein bL31 (73 aa).

It belongs to the bacterial ribosomal protein bL31 family. Type A subfamily. Part of the 50S ribosomal subunit.

Functionally, binds the 23S rRNA. The polypeptide is Large ribosomal subunit protein bL31 (Bartonella henselae (strain ATCC 49882 / DSM 28221 / CCUG 30454 / Houston 1) (Rochalimaea henselae)).